Consider the following 55-residue polypeptide: Accessory gland-specific peptide 70A (55 aa).

The signal sequence occupies residues 1-19; the sequence is MKTLSLFLVLVCLLGLVQS. Residues proline 28, proline 32, proline 34, and proline 38 each carry the hydroxyproline modification. Cysteine 43 and cysteine 55 are oxidised to a cystine.

In terms of tissue distribution, main cells of the accessory glands of males (paragonial gland).

The protein resides in the secreted. Functionally, represses female sexual receptivity and stimulates oviposition. The chain is Accessory gland-specific peptide 70A (Acp70A) from Drosophila mauritiana (Fruit fly).